Consider the following 176-residue polypeptide: Prenylated Rab acceptor 1 (176 aa).

Met1 bears the N-acetylmethionine mark. An SKL peroxisome targeting motif motif is present at residues 11–13 (SRF). Ser18 bears the Phosphoserine mark. Helical transmembrane passes span 84 to 104 (LLTN…IVGI) and 129 to 149 (VCVA…LWLI).

The protein belongs to the PRA1 family. Interacts with YIP1 and the Rab GTPases SEC4, YPT1, YPT6, YPT10, YPT11, YPT31, YPT32 and YPT52.

The protein localises to the golgi apparatus membrane. It is found in the peroxisome membrane. The polypeptide is Prenylated Rab acceptor 1 (YIP3) (Saccharomyces cerevisiae (strain ATCC 204508 / S288c) (Baker's yeast)).